Consider the following 146-residue polypeptide: D-aminoacyl-tRNA deacylase (146 aa).

The Gly-cisPro motif, important for rejection of L-amino acids signature appears at 137–138 (GP).

It belongs to the DTD family. In terms of assembly, homodimer.

It is found in the cytoplasm. The enzyme catalyses glycyl-tRNA(Ala) + H2O = tRNA(Ala) + glycine + H(+). It catalyses the reaction a D-aminoacyl-tRNA + H2O = a tRNA + a D-alpha-amino acid + H(+). Functionally, an aminoacyl-tRNA editing enzyme that deacylates mischarged D-aminoacyl-tRNAs. Also deacylates mischarged glycyl-tRNA(Ala), protecting cells against glycine mischarging by AlaRS. Acts via tRNA-based rather than protein-based catalysis; rejects L-amino acids rather than detecting D-amino acids in the active site. By recycling D-aminoacyl-tRNA to D-amino acids and free tRNA molecules, this enzyme counteracts the toxicity associated with the formation of D-aminoacyl-tRNA entities in vivo and helps enforce protein L-homochirality. This is D-aminoacyl-tRNA deacylase from Shouchella clausii (strain KSM-K16) (Alkalihalobacillus clausii).